A 456-amino-acid chain; its full sequence is Adenylosuccinate lyase (456 aa).

N(6)-(1,2-dicarboxyethyl)-AMP contacts are provided by residues 15-16, 90-92, and 122-123; these read RY, NHD, and TS. The Proton donor/acceptor role is filled by His171. Position 247 (Gln247) interacts with N(6)-(1,2-dicarboxyethyl)-AMP. Ser295 serves as the catalytic Proton donor/acceptor. N(6)-(1,2-dicarboxyethyl)-AMP is bound by residues Ser296, 301–303, Asn309, Arg335, and 340–344; these read KVN and STVLR.

The protein belongs to the lyase 1 family. Adenylosuccinate lyase subfamily. Homotetramer. Residues from neighboring subunits contribute catalytic and substrate-binding residues to each active site.

It catalyses the reaction N(6)-(1,2-dicarboxyethyl)-AMP = fumarate + AMP. The catalysed reaction is (2S)-2-[5-amino-1-(5-phospho-beta-D-ribosyl)imidazole-4-carboxamido]succinate = 5-amino-1-(5-phospho-beta-D-ribosyl)imidazole-4-carboxamide + fumarate. The protein operates within purine metabolism; AMP biosynthesis via de novo pathway; AMP from IMP: step 2/2. It functions in the pathway purine metabolism; IMP biosynthesis via de novo pathway; 5-amino-1-(5-phospho-D-ribosyl)imidazole-4-carboxamide from 5-amino-1-(5-phospho-D-ribosyl)imidazole-4-carboxylate: step 2/2. Its function is as follows. Catalyzes two reactions in de novo purine nucleotide biosynthesis. Catalyzes the breakdown of 5-aminoimidazole- (N-succinylocarboxamide) ribotide (SAICAR or 2-[5-amino-1-(5-phospho-beta-D-ribosyl)imidazole-4-carboxamido]succinate) to 5-aminoimidazole-4-carboxamide ribotide (AICAR or 5-amino-1-(5-phospho-beta-D-ribosyl)imidazole-4-carboxamide) and fumarate, and of adenylosuccinate (ADS or N(6)-(1,2-dicarboxyethyl)-AMP) to adenosine monophosphate (AMP) and fumarate. The polypeptide is Adenylosuccinate lyase (purB) (Buchnera aphidicola subsp. Acyrthosiphon pisum (strain APS) (Acyrthosiphon pisum symbiotic bacterium)).